The following is a 231-amino-acid chain: UPF0758 protein YsxA (231 aa).

One can recognise an MPN domain in the interval 109–231 (VIRSPEDGAN…FVSLKEKGYL (123 aa)). Positions 180, 182, and 193 each coordinate Zn(2+). A JAMM motif motif is present at residues 180–193 (HNHPSGDPTPSRED).

The protein belongs to the UPF0758 family.

In Bacillus subtilis (strain 168), this protein is UPF0758 protein YsxA (ysxA).